Here is a 485-residue protein sequence, read N- to C-terminus: Glutamate--tRNA ligase (485 aa).

An L-glutamate-binding site is contributed by arginine 6. The short motif at 9–19 (PSPTGNLHIGT) is the 'HIGH' region element. L-glutamate-binding positions include tyrosine 192 and 210-214 (RGEDH). Positions 248-252 (KLSKR) match the 'KMSKS' region motif. Lysine 251 provides a ligand contact to ATP.

Belongs to the class-I aminoacyl-tRNA synthetase family. Glutamate--tRNA ligase type 1 subfamily. Monomer. The cofactor is Does not require zinc..

It is found in the cytoplasm. It carries out the reaction tRNA(Glu) + L-glutamate + ATP = L-glutamyl-tRNA(Glu) + AMP + diphosphate. Its function is as follows. Non-discriminating glutamyl-tRNA synthetase. Catalyzes the attachment of glutamate to tRNA(Glu) in a two-step reaction: glutamate is first activated by ATP to form Glu-AMP and then transferred to the acceptor end of tRNA(Glu). Acylates both tRNA(Glu) and tRNA(Gln) with glutamate, but has 13-fold higher efficiency with tRNA(Glu). In Thermosynechococcus vestitus (strain NIES-2133 / IAM M-273 / BP-1), this protein is Glutamate--tRNA ligase (gltX).